We begin with the raw amino-acid sequence, 579 residues long: Alpha-longipinene synthase (579 aa).

Residues D332, D336, D476, and N484 each contribute to the Mg(2+) site. Positions 332–336 (DDLYD) match the DDXXD motif motif.

The protein belongs to the terpene synthase family. Tpsd subfamily. Mg(2+) is required as a cofactor. Mn(2+) serves as cofactor.

It carries out the reaction (2E,6E)-farnesyl diphosphate = alpha-longipinene + diphosphate. It functions in the pathway sesquiterpene biosynthesis. It participates in terpene metabolism; oleoresin biosynthesis. Terpene synthase (TPS) involved in the biosynthesis of sesquiterpene natural products included in conifer oleoresin secretions and volatile emissions; these compounds contribute to biotic and abiotic stress defense against herbivores and pathogens. Catalyzes the conversion of (2E,6E)-farnesyl diphosphate (FPP) to alpha-longipinene. The polypeptide is Alpha-longipinene synthase (Picea sitchensis (Sitka spruce)).